The sequence spans 414 residues: Enolase (414 aa).

(2R)-2-phosphoglycerate is bound at residue glutamine 162. Glutamate 204 (proton donor) is an active-site residue. Residues aspartate 239, glutamate 280, and aspartate 307 each contribute to the Mg(2+) site. The (2R)-2-phosphoglycerate site is built by lysine 332, arginine 361, serine 362, and lysine 383. Lysine 332 serves as the catalytic Proton acceptor.

Belongs to the enolase family. It depends on Mg(2+) as a cofactor.

The protein localises to the cytoplasm. The protein resides in the secreted. Its subcellular location is the cell surface. The enzyme catalyses (2R)-2-phosphoglycerate = phosphoenolpyruvate + H2O. It participates in carbohydrate degradation; glycolysis; pyruvate from D-glyceraldehyde 3-phosphate: step 4/5. Catalyzes the reversible conversion of 2-phosphoglycerate (2-PG) into phosphoenolpyruvate (PEP). It is essential for the degradation of carbohydrates via glycolysis. The protein is Enolase of Campylobacter jejuni subsp. doylei (strain ATCC BAA-1458 / RM4099 / 269.97).